Here is a 150-residue protein sequence, read N- to C-terminus: S-protein homolog 3 (150 aa).

The first 23 residues, 1-23, serve as a signal peptide directing secretion; the sequence is MKNILKTQVHVVVIYLLIKIAFS. N-linked (GlcNAc...) asparagine glycans are attached at residues N32 and N70.

Belongs to the plant self-incompatibility (S1) protein family.

The protein resides in the secreted. The protein is S-protein homolog 3 of Arabidopsis thaliana (Mouse-ear cress).